Reading from the N-terminus, the 257-residue chain is Zinc transporter ZupT (257 aa).

Transmembrane regions (helical) follow at residues 5–25 (LILT…GVLG), 32–52 (LLAF…LMEM), and 61–81 (GMSP…YFGL). Fe(2+) contacts are provided by N120 and E123. Zn(2+) is bound by residues E123 and H148. Helical transmembrane passes span 137 to 157 (LGFG…LAVA), 171 to 191 (ILWA…AWLI), 195 to 215 (MISP…MVAL), and 236 to 256 (GVLC…TAGI). Fe(2+) contacts are provided by N149, E152, and E181. E152 contacts Zn(2+).

The protein belongs to the ZIP transporter (TC 2.A.5) family. ZupT subfamily.

It is found in the cell inner membrane. The catalysed reaction is Zn(2+)(in) = Zn(2+)(out). Mediates zinc uptake. May also transport other divalent cations. This chain is Zinc transporter ZupT, found in Escherichia coli O127:H6 (strain E2348/69 / EPEC).